The sequence spans 235 residues: Adenosine 5'-phosphosulfate reductase (235 aa).

Positions 121, 122, 204, and 207 each coordinate [4Fe-4S] cluster. Catalysis depends on cysteine 230, which acts as the Nucleophile; cysteine thiosulfonate intermediate.

The protein belongs to the PAPS reductase family. CysH subfamily. The cofactor is [4Fe-4S] cluster.

The protein resides in the cytoplasm. The catalysed reaction is [thioredoxin]-disulfide + sulfite + AMP + 2 H(+) = adenosine 5'-phosphosulfate + [thioredoxin]-dithiol. It functions in the pathway sulfur metabolism; hydrogen sulfide biosynthesis; sulfite from sulfate. Functionally, catalyzes the formation of sulfite from adenosine 5'-phosphosulfate (APS) using thioredoxin as an electron donor. This Geobacillus kaustophilus (strain HTA426) protein is Adenosine 5'-phosphosulfate reductase.